The sequence spans 292 residues: Protein/nucleic acid deglycase HchA (292 aa).

Over residues 1-12 (MSQDVNELSKQP) the composition is skewed to polar residues. The segment at 1–23 (MSQDVNELSKQPTPDKAEDNAFF) is disordered. Residue Cys190 is the Nucleophile of the active site.

This sequence belongs to the peptidase C56 family. HchA subfamily.

The protein localises to the cytoplasm. The enzyme catalyses N(omega)-(1-hydroxy-2-oxopropyl)-L-arginyl-[protein] + H2O = lactate + L-arginyl-[protein] + H(+). It carries out the reaction N(6)-(1-hydroxy-2-oxopropyl)-L-lysyl-[protein] + H2O = lactate + L-lysyl-[protein] + H(+). The catalysed reaction is S-(1-hydroxy-2-oxopropyl)-L-cysteinyl-[protein] + H2O = lactate + L-cysteinyl-[protein] + H(+). It catalyses the reaction N(omega)-(1-hydroxy-2-oxoethyl)-L-arginyl-[protein] + H2O = L-arginyl-[protein] + glycolate + H(+). The enzyme catalyses N(6)-(1-hydroxy-2-oxoethyl)-L-lysyl-[protein] + H2O = glycolate + L-lysyl-[protein] + H(+). It carries out the reaction S-(1-hydroxy-2-oxoethyl)-L-cysteinyl-[protein] + H2O = glycolate + L-cysteinyl-[protein] + H(+). The catalysed reaction is N(2)-(1-hydroxy-2-oxopropyl)-dGTP + H2O = lactate + dGTP + H(+). It catalyses the reaction N(2)-(1-hydroxy-2-oxopropyl)-GTP + H2O = lactate + GTP + H(+). The enzyme catalyses N(2)-(1-hydroxy-2-oxopropyl)-GDP + H2O = lactate + GDP + H(+). It carries out the reaction N(2)-(1-hydroxy-2-oxopropyl)-GMP + H2O = lactate + GMP + H(+). The catalysed reaction is N(2)-(1-hydroxy-2-oxoethyl)-dGTP + H2O = dGTP + glycolate + H(+). It catalyses the reaction N(2)-(1-hydroxy-2-oxoethyl)-GTP + H2O = glycolate + GTP + H(+). The enzyme catalyses N(2)-(1-hydroxy-2-oxoethyl)-GDP + H2O = glycolate + GDP + H(+). It carries out the reaction N(2)-(1-hydroxy-2-oxoethyl)-GMP + H2O = glycolate + GMP + H(+). The catalysed reaction is an N(2)-(1-hydroxy-2-oxopropyl)-guanosine in RNA + H2O = a guanosine in RNA + lactate + H(+). It catalyses the reaction an N(2)-(1-hydroxy-2-oxopropyl)-2'-deoxyguanosine in DNA + H2O = a 2'-deoxyguanosine in DNA + lactate + H(+). The enzyme catalyses an N(2)-(1-hydroxy-2-oxoethyl)-guanosine in RNA + H2O = a guanosine in RNA + glycolate + H(+). It carries out the reaction an N(2)-(1-hydroxy-2-oxoethyl)-2'-deoxyguanosine in DNA + H2O = a 2'-deoxyguanosine in DNA + glycolate + H(+). In terms of biological role, protein and nucleotide deglycase that catalyzes the deglycation of the Maillard adducts formed between amino groups of proteins or nucleotides and reactive carbonyl groups of glyoxals. Thus, functions as a protein deglycase that repairs methylglyoxal- and glyoxal-glycated proteins, and releases repaired proteins and lactate or glycolate, respectively. Deglycates cysteine, arginine and lysine residues in proteins, and thus reactivates these proteins by reversing glycation by glyoxals. Acts on early glycation intermediates (hemithioacetals and aminocarbinols), preventing the formation of Schiff bases and advanced glycation endproducts (AGE). Also functions as a nucleotide deglycase able to repair glycated guanine in the free nucleotide pool (GTP, GDP, GMP, dGTP) and in DNA and RNA. Is thus involved in a major nucleotide repair system named guanine glycation repair (GG repair), dedicated to reversing methylglyoxal and glyoxal damage via nucleotide sanitization and direct nucleic acid repair. Plays an important role in protecting cells from carbonyl stress. The sequence is that of Protein/nucleic acid deglycase HchA from Staphylococcus aureus (strain bovine RF122 / ET3-1).